Here is a 609-residue protein sequence, read N- to C-terminus: Proline--tRNA ligase (609 aa).

It belongs to the class-II aminoacyl-tRNA synthetase family. ProS type 1 subfamily. Homodimer.

Its subcellular location is the cytoplasm. The catalysed reaction is tRNA(Pro) + L-proline + ATP = L-prolyl-tRNA(Pro) + AMP + diphosphate. Its function is as follows. Catalyzes the attachment of proline to tRNA(Pro) in a two-step reaction: proline is first activated by ATP to form Pro-AMP and then transferred to the acceptor end of tRNA(Pro). As ProRS can inadvertently accommodate and process non-cognate amino acids such as alanine and cysteine, to avoid such errors it has two additional distinct editing activities against alanine. One activity is designated as 'pretransfer' editing and involves the tRNA(Pro)-independent hydrolysis of activated Ala-AMP. The other activity is designated 'posttransfer' editing and involves deacylation of mischarged Ala-tRNA(Pro). The misacylated Cys-tRNA(Pro) is not edited by ProRS. The chain is Proline--tRNA ligase from Synechococcus sp. (strain JA-2-3B'a(2-13)) (Cyanobacteria bacterium Yellowstone B-Prime).